Here is a 281-residue protein sequence, read N- to C-terminus: Bis(5'-nucleosyl)-tetraphosphatase, symmetrical (281 aa).

This sequence belongs to the Ap4A hydrolase family.

It carries out the reaction P(1),P(4)-bis(5'-adenosyl) tetraphosphate + H2O = 2 ADP + 2 H(+). In terms of biological role, hydrolyzes diadenosine 5',5'''-P1,P4-tetraphosphate to yield ADP. The chain is Bis(5'-nucleosyl)-tetraphosphatase, symmetrical from Pectobacterium atrosepticum (strain SCRI 1043 / ATCC BAA-672) (Erwinia carotovora subsp. atroseptica).